The sequence spans 211 residues: Large ribosomal subunit protein eL13 (211 aa).

K16 is modified (N6-acetyllysine). Residues S52 and S77 each carry the phosphoserine modification. Residues K123 and K145 each participate in a glycyl lysine isopeptide (Lys-Gly) (interchain with G-Cter in SUMO2) cross-link. Residue K174 forms a Glycyl lysine isopeptide (Lys-Gly) (interchain with G-Cter in SUMO1); alternate linkage. Glycyl lysine isopeptide (Lys-Gly) (interchain with G-Cter in SUMO2); alternate cross-links involve residues K174 and K177. K177 carries the N6-acetyllysine; alternate modification.

The protein belongs to the eukaryotic ribosomal protein eL13 family. As to quaternary structure, component of the 60S large ribosomal subunit (LSU).

It is found in the cytoplasm. Functionally, component of the ribosome, a large ribonucleoprotein complex responsible for the synthesis of proteins in the cell. The small ribosomal subunit (SSU) binds messenger RNAs (mRNAs) and translates the encoded message by selecting cognate aminoacyl-transfer RNA (tRNA) molecules. The large subunit (LSU) contains the ribosomal catalytic site termed the peptidyl transferase center (PTC), which catalyzes the formation of peptide bonds, thereby polymerizing the amino acids delivered by tRNAs into a polypeptide chain. The nascent polypeptides leave the ribosome through a tunnel in the LSU and interact with protein factors that function in enzymatic processing, targeting, and the membrane insertion of nascent chains at the exit of the ribosomal tunnel. As part of the LSU, it is probably required for its formation and the maturation of rRNAs. Plays a role in bone development. The polypeptide is Large ribosomal subunit protein eL13 (RPL13) (Bos taurus (Bovine)).